The primary structure comprises 473 residues: Calcium/calmodulin-dependent protein kinase type IV (473 aa).

Phosphoserine; by autocatalysis is present on residues S12 and S13. A Protein kinase domain is found at 46–300 (FEVESELGRG…TFQALQHPWV (255 aa)). Residues 52–60 (LGRGATSIV) and K75 each bind ATP. A glycan (O-linked (GlcNAc) threonine) is linked at T57. An O-linked (GlcNAc) serine glycan is attached at S58. A glycan (O-linked (GlcNAc) serine) is linked at S137. Catalysis depends on D164, which acts as the Proton acceptor. A glycan (O-linked (GlcNAc) serine) is linked at S189. T200 carries the phosphothreonine; by CaMKK1 and CaMKK2 modification. The tract at residues 305-321 (ANFVHMDTAQKKLQEFN) is autoinhibitory domain. Residues 306 to 323 (NFVHMDTAQKKLQEFNAR) are PP2A-binding. The interval 322-341 (ARRKLKAAVKAVVASSRLGS) is calmodulin-binding. A Phosphoserine; by autocatalysis modification is found at S336. Phosphoserine is present on S341. The span at 341-350 (SASSSHGSIQ) shows a compositional bias: low complexity. Disordered regions lie at residues 341–368 (SASS…GNED) and 445–473 (EEAA…LPEY). Residues S344, S345, and S356 are each glycosylated (O-linked (GlcNAc) serine). The residue at position 360 (S360) is a Phosphoserine.

This sequence belongs to the protein kinase superfamily. CAMK Ser/Thr protein kinase family. CaMK subfamily. Monomer. Interacts with protein phosphatase 2A (PPP2CA/PPP2CB); the interaction is mutually exclusive with binding to Ca(2+)/calmodulin. In terms of processing, phosphorylated by CaMKK1 and CaMKK2 on Thr-200. Dephosphorylated by protein phosphatase 2A. Autophosphorylated on Ser-12 and Ser-13. Glycosylation at Ser-189 modulates the phosphorylation of CaMK4 at Thr-200 and negatively regulates its activity toward CREB1 in basal conditions and during early inomycin stimulation. Expressed in brain, thymus, CD4 T-cells, testis and epithelial ovarian cancer tissue.

The protein resides in the cytoplasm. It localises to the nucleus. The catalysed reaction is L-seryl-[protein] + ATP = O-phospho-L-seryl-[protein] + ADP + H(+). It carries out the reaction L-threonyl-[protein] + ATP = O-phospho-L-threonyl-[protein] + ADP + H(+). Activated by Ca(2+)/calmodulin. Binding of calmodulin results in conformational change that relieves intrasteric autoinhibition and allows phosphorylation of Thr-200 within the activation loop by CaMKK1 or CaMKK2. Phosphorylation of Thr-200 results in a 10-20-fold increase in total activity to generate Ca(2+)/calmodulin-independent activity. Autophosphorylation of the N-terminus Ser-12 and Ser-13 is required for full activation. Inactivated by protein phosphatase 2A (PPP2CA/PPP2CB) which dephosphorylates Thr-200, thereby terminating autonomous activity and helping to maintain the enzyme in its autoinhibited state. Calcium/calmodulin-dependent protein kinase that operates in the calcium-triggered CaMKK-CaMK4 signaling cascade and regulates, mainly by phosphorylation, the activity of several transcription activators, such as CREB1, MEF2D, JUN and RORA, which play pivotal roles in immune response, inflammation, and memory consolidation. In the thymus, regulates the CD4(+)/CD8(+) double positive thymocytes selection threshold during T-cell ontogeny. In CD4 memory T-cells, is required to link T-cell antigen receptor (TCR) signaling to the production of IL2, IFNG and IL4 (through the regulation of CREB and MEF2). Regulates the differentiation and survival phases of osteoclasts and dendritic cells (DCs). Mediates DCs survival by linking TLR4 and the regulation of temporal expression of BCL2. Phosphorylates the transcription activator CREB1 on 'Ser-133' in hippocampal neuron nuclei and contribute to memory consolidation and long term potentiation (LTP) in the hippocampus. Can activate the MAP kinases MAPK1/ERK2, MAPK8/JNK1 and MAPK14/p38 and stimulate transcription through the phosphorylation of ELK1 and ATF2. Can also phosphorylate in vitro CREBBP, PRM2, MEF2A and STMN1/OP18. The protein is Calcium/calmodulin-dependent protein kinase type IV (CAMK4) of Homo sapiens (Human).